The primary structure comprises 436 residues: Protein PhoH2 (436 aa).

One can recognise a PINc domain in the interval 12–137 (RTYVLDTSVL…LVSKDLPMRL (126 aa)).

In the N-terminal section; belongs to the PINc/VapC protein family. This sequence in the C-terminal section; belongs to the PhoH family.

It catalyses the reaction n ATP + n H2O + wound RNA = n ADP + n phosphate + unwound RNA.. It carries out the reaction ATP + H2O = ADP + phosphate + H(+). The enzyme catalyses GTP + H2O = GDP + phosphate + H(+). Its function is as follows. Unwinds and/or cleaves 5'-tailed RNA in vitro, the reaction is maximal with hydrolyzable ATP; double-stranded (ds)RNA and dsDNA are not unwound. Unlike the protein in mycobacteria there does not seem to be an antitoxin gene upstream, suggesting this is not a toxin-antitoxin system. Has ATPase and GTPase activities. This is Protein PhoH2 from Thermobispora bispora (strain ATCC 19993 / DSM 43833 / CBS 139.67 / JCM 10125 / KCTC 9307 / NBRC 14880 / R51).